The primary structure comprises 116 residues: Large ribosomal subunit protein bL21c (116 aa).

The protein belongs to the bacterial ribosomal protein bL21 family. As to quaternary structure, part of the 50S ribosomal subunit.

It localises to the plastid. The protein localises to the chloroplast. Functionally, this protein binds to 23S rRNA. The protein is Large ribosomal subunit protein bL21c of Marchantia polymorpha (Common liverwort).